The sequence spans 701 residues: Putative pentatricopeptide repeat-containing protein At3g25970 (701 aa).

PPR repeat units follow at residues 34–64 (DIYVSNRILDSYIKFGFLGYANMLFDEMPKR), 65–99 (DSVSWNTMISGYTSCGKLEDAWCLFTCMKRSGSDV), 100–134 (DGYSFSRLLKGIASVKRFDLGEQVHGLVIKGGYEC), 135–165 (NVYVGSSLVDMYAKCERVEDAFEAFKEISEP), 166–200 (NSVSWNALIAGFVQVRDIKTAFWLLGLMEMKAAVT), 202–236 (DAGTFAPLLTLLDDPMFCNLLKQVHAKVLKLGLQH), 237–267 (EITICNAMISSYADCGSVSDAKRVFDGLGGS), 269–303 (DLISWNSMIAGFSKHELKESAFELFIQMQRHWVET), 304–338 (DIYTYTGLLSACSGEEHQIFGKSLHGMVIKKGLEQ), 339–371 (VTSATNALISMYIQFPTGTMEDALSLFESLKSK), 372–406 (DLISWNSIITGFAQKGLSEDAVKFFSYLRSSEIKV), 407–441 (DDYAFSALLRSCSDLATLQLGQQIHALATKSGFVS), 442–472 (NEFVISSLIVMYSKCGIIESARKCFQQISSK), 474–508 (STVAWNAMILGYAQHGLGQVSLDLFSQMCNQNVKL), 509–539 (DHVTFTAILTACSHTGLIQEGLELLNLMEPV), and 545–575 (RMEHYAAAVDLLGRAGLVNKAKELIESMPLN). The tract at residues 580-655 (VLKTFLGVCR…VPGWSWIEIR (76 aa)) is type E motif. The type E(+) motif stretch occupies residues 656-686 (NQVKAFNAEDRSNPLCQDIYMMIKDLTQEMQ).

Belongs to the PPR family. PCMP-E subfamily.

This is Putative pentatricopeptide repeat-containing protein At3g25970 (PCMP-E46) from Arabidopsis thaliana (Mouse-ear cress).